The primary structure comprises 328 residues: Probable magnesium transporter NIPA6 (328 aa).

Over 1–4 (METD) the chain is Extracellular. The chain crosses the membrane as a helical span at residues 5 to 25 (NGKGLILAVASSVFIGSSFIL). Over 26–51 (KKKGLKRAGAIGTRAGYGGYTYLLEP) the chain is Cytoplasmic. The helical transmembrane segment at 52–72 (LWWAGMVTMIVGEAANFVAYI) threads the bilayer. Residues 73–76 (YAPA) are Extracellular-facing. The helical transmembrane segment at 77–97 (VLVTPLGALSIIISAVLAHFL) threads the bilayer. Residues 98-104 (LKEKLKK) are Cytoplasmic-facing. Residues 105–125 (MGVLGCVSCIVGSVVIVIHAP) form a helical membrane-spanning segment. At 126 to 142 (KEQTPNSVEEIWNLATQ) the chain is on the extracellular side. Residues 143–163 (PAFLIYVAITMSIVLALILHF) traverse the membrane as a helical segment. The Cytoplasmic segment spans residues 164-175 (EPLCGQTNILVY). Residues 176–196 (IGICSLMGALTVMSIKAIGIA) form a helical membrane-spanning segment. Over 197–209 (IKLTMEGVSQIGY) the chain is Extracellular. The chain crosses the membrane as a helical span at residues 210-230 (PQTWLFVMVAVTCVVTQLIYL). The Cytoplasmic segment spans residues 231-240 (NKALDTFNAA). A helical transmembrane segment spans residues 241-261 (IVSPVYYVMFTTLTIVASAIM). Residues 262-269 (FKDWSGQD) are Extracellular-facing. The helical transmembrane segment at 270-290 (AASVASELCGFITVLTGTMIL) threads the bilayer. Residues 291-328 (HGTREEEQQQASSEHVRWYDSRKSMNEEHLVSLYSPEY) are Cytoplasmic-facing.

This sequence belongs to the NIPA (TC 2.A.7) family. Homodimer.

Its subcellular location is the cell membrane. It localises to the early endosome. Acts as a Mg(2+) transporter. Can also transport other divalent cations such as Fe(2+), Sr(2+), Ba(2+), Mn(2+) and Co(2+) but to a much less extent than Mg(2+). In Arabidopsis thaliana (Mouse-ear cress), this protein is Probable magnesium transporter NIPA6.